The sequence spans 2272 residues: Voltage-dependent R-type calcium channel subunit alpha-1E (2272 aa).

Residues 1-40 (MARFGEAVVVGRPGSGDGDSDQSRNRQGTPVPASGPAAAY) form a disordered region. Residues 1–90 (MARFGEAVVV…KYAKKLIDWP (90 aa)) lie on the Cytoplasmic side of the membrane. Serine 15 and serine 20 each carry phosphoserine. Residues 77–355 (NIVRKYAKKL…LVLGVLSGEF (279 aa)) form an I repeat. A helical transmembrane segment spans residues 91–109 (PFEYMILATIIANCIVLAL). The Extracellular segment spans residues 110–128 (EQHLPEDDKTPMSRRLEKT). The chain crosses the membrane as a helical span at residues 129-147 (EPYFIGIFCFEAGIKIVAL). The Cytoplasmic portion of the chain corresponds to 148-159 (GFIFHKGSYLRN). Residues 160 to 174 (GWNVMDFIVVLSGIL) form a helical membrane-spanning segment. Topologically, residues 175 to 186 (ATAGTHFNTHVD) are extracellular. A helical membrane pass occupies residues 187-206 (LRALRAVRVLRPLKLVSGIP). At 207–224 (SLQIVLKSIMKAMVPLLQ) the chain is on the cytoplasmic side. Residues 225 to 245 (IGLLLFFAILMFAIIGLEFYS) traverse the membrane as a helical segment. Residues 246–327 (GKLHRACFMN…NTNDALGATW (82 aa)) lie on the Extracellular side of the membrane. Asparagine 255 carries an N-linked (GlcNAc...) asparagine glycan. The chain crosses the membrane as a helical span at residues 328-351 (NWLYFIPLIIIGSFFVLNLVLGVL). Residues 352–477 (SGEFAKERER…ISIRHMVKSQ (126 aa)) are Cytoplasmic-facing. A binding to the beta subunit region spans residues 375–392 (QQIERELNGYRAWIDKAE). Aspartate 427 serves as a coordination point for Ca(2+). Serine 428 is subject to Phosphoserine. Residues serine 429, glutamate 431, cysteine 433, and serine 438 each contribute to the Ca(2+) site. A Phosphothreonine modification is found at threonine 441. The stretch at 463–707 (ERLLRISIRH…VFLAIAVDNL (245 aa)) is one II repeat. The helical transmembrane segment at 478 to 497 (VFYWIVLSVVALNTACVAIV) threads the bilayer. Residues 498–510 (HHNQPQWLTHLLY) lie on the Extracellular side of the membrane. Residues 511–530 (YAEFLFLGLFLLEMSLKMYG) form a helical membrane-spanning segment. The Cytoplasmic portion of the chain corresponds to 531–539 (MGPRLYFHS). A helical transmembrane segment spans residues 540–558 (SFNCFDFGVTVGSIFEVVW). The Extracellular portion of the chain corresponds to 559–568 (AIFRPGTSFG). Residues 569-587 (ISVLRALRLLRIFKITKYW) form a helical membrane-spanning segment. The Cytoplasmic portion of the chain corresponds to 588–606 (ASLRNLVVSLMSSMKSIIS). The helical transmembrane segment at 607–626 (LLFLLFLFIVVFALLGMQLF) threads the bilayer. Topologically, residues 627–679 (GGRFNFNDGTPSANFDTFPAAIMTVFQILTGEDWNEVMYNGIRSQGGVSSGMW) are extracellular. The chain crosses the membrane as a helical span at residues 680–704 (SAIYFIVLTLFGNYTLLNVFLAIAV). The Cytoplasmic portion of the chain corresponds to 705–1150 (DNLANAQELT…TTNPIRRACH (446 aa)). The tract at residues 730 to 777 (LQKAKEVSPMSAPNMPSIERDRRRRHHMSMWEPRSSHLRERRRRHHMS) is disordered. Serine 737, serine 746, serine 794, serine 816, and serine 856 each carry phosphoserine. Disordered stretches follow at residues 854-994 (GGSL…VPRG) and 1091-1127 (SNKT…RETG). The segment covering 914 to 927 (RHRQSQRRSRHRRV) has biased composition (basic residues). Residues 934-946 (SASASRSRSASQE) are compositionally biased toward low complexity. Serine 948 carries the phosphoserine modification. 2 stretches are compositionally biased toward basic and acidic residues: residues 956–985 (EGEK…DLRR) and 1094–1105 (TDGEASPLKEAE). Serine 1099 carries the post-translational modification Phosphoserine. Residues 1143-1429 (NPIRRACHYI…IFVALIIITF (287 aa)) form an III repeat. Residues 1151–1167 (YIVNLRYFEMCILLVIA) form a helical membrane-spanning segment. Residues 1168–1191 (ASSIALAAEDPVLTNSERNKVLRY) lie on the Extracellular side of the membrane. A helical transmembrane segment spans residues 1192-1211 (FDYVFTGVFTFEMVIKMIDQ). The Cytoplasmic portion of the chain corresponds to 1212-1219 (GLILQDGS). The helical transmembrane segment at 1220–1242 (YFRDLWNILDFVVVVGALVAFAL) threads the bilayer. Residues 1243-1256 (ANALGTNKGRDIKT) lie on the Extracellular side of the membrane. The chain crosses the membrane as a helical span at residues 1257–1274 (IKSLRVLRVLRPLKTIKR). Topologically, residues 1275–1293 (LPKLKAVFDCVVTSLKNVF) are cytoplasmic. A helical transmembrane segment spans residues 1294–1313 (NILIVYKLFMFIFAVIAVQL). The Extracellular portion of the chain corresponds to 1314 to 1400 (FKGKFFYCTD…DRGPSRSNRM (87 aa)). A helical transmembrane segment spans residues 1401–1424 (EMSIFYVVYFVVFPFFFVNIFVAL). At 1425–1481 (IIITFQEQGDKMMEECSLEKNERACIDFAISAKPLTRYMPQNRHTFQYRVWHFVVSP) the chain is on the cytoplasmic side. One copy of the IV repeat lies at 1466 to 1729 (NRHTFQYRVW…LFVAVIMDNF (264 aa)). A helical membrane pass occupies residues 1482 to 1500 (SFEYTIMAMIALNTVVLMM). Residues 1501-1515 (KYYTAPCTYELALKY) are Extracellular-facing. A helical membrane pass occupies residues 1516–1535 (LNIAFTMVFSLECVLKVIAF). Over 1536-1543 (GFLNYFRD) the chain is Cytoplasmic. Residues 1544-1562 (TWNIFDFITVIGSITEIIL) traverse the membrane as a helical segment. At 1563–1573 (TDSKLVNTSGF) the chain is on the extracellular side. N-linked (GlcNAc...) asparagine glycosylation occurs at asparagine 1569. A helical membrane pass occupies residues 1574 to 1592 (NMSFLKLFRAARLIKLLRQ). The Cytoplasmic portion of the chain corresponds to 1593–1611 (GYTIRILLWTFVQSFKALP). The helical transmembrane segment at 1612 to 1631 (YVCLLIAMLFFIYAIIGMQV) threads the bilayer. The Extracellular portion of the chain corresponds to 1632–1700 (FGNIKLDEES…QNESERCGTD (69 aa)). An N-linked (GlcNAc...) asparagine glycan is attached at asparagine 1692. The chain crosses the membrane as a helical span at residues 1701 to 1726 (LAYVYFVSFIFFCSFLMLNLFVAVIM). The Cytoplasmic portion of the chain corresponds to 1727 to 2272 (DNFEYLTRDS…LSDTEEDDKC (546 aa)). The EF-hand domain maps to 1742–1777 (HHLDEFVRVWAEYDRAACGRIHYTEMYEMLTLMSPP). Aspartate 1755, arginine 1761, and glutamate 1766 together coordinate Ca(2+). A disordered region spans residues 2021–2186 (SAHRLNSDSG…QQGQHPSPQH (166 aa)). The span at 2025–2045 (LNSDSGHKSDTHRSGGRERGR) shows a compositional bias: basic and acidic residues. Serine 2054 and serine 2073 each carry phosphoserine. Basic and acidic residues predominate over residues 2061–2078 (NSEERGTQADWESPERRQ). Positions 2097–2112 (SLSESSIPSISDTSTP) are enriched in low complexity. The segment covering 2155–2174 (LASQALESNSACLTESSNSL) has biased composition (polar residues). The segment covering 2175 to 2186 (HPQQGQHPSPQH) has biased composition (low complexity).

The protein belongs to the calcium channel alpha-1 subunit (TC 1.A.1.11) family. CACNA1E subfamily. In terms of assembly, interacts with EFHC1. Voltage-dependent calcium channels are multisubunit complexes, consisting of alpha-1, alpha-2, beta and delta subunits in a 1:1:1:1 ratio. The channel activity is directed by the pore-forming and voltage-sensitive alpha-1 subunit. In many cases, this subunit is sufficient to generate voltage-sensitive calcium channel activity. The auxiliary subunits beta and alpha-2/delta linked by a disulfide bridge regulate the channel activity. As to expression, expressed in neuronal tissues, retina, spleen, and pancreatic islet cells.

It localises to the membrane. It catalyses the reaction Ca(2+)(in) = Ca(2+)(out). Voltage-sensitive calcium channels (VSCC) mediate the entry of calcium ions into excitable cells and are also involved in a variety of calcium-dependent processes, including muscle contraction, hormone or neurotransmitter release, gene expression, cell motility, cell division and cell death. The isoform alpha-1E gives rise to R-type calcium currents. R-type calcium channels belong to the 'high-voltage activated' (HVA) group and are blocked by nickel. They are however insensitive to dihydropyridines (DHP). Calcium channels containing alpha-1E subunit could be involved in the modulation of firing patterns of neurons which is important for information processing. This chain is Voltage-dependent R-type calcium channel subunit alpha-1E (Cacna1e), found in Mus musculus (Mouse).